The chain runs to 214 residues: Adenylate kinase (214 aa).

Gly11–Thr16 is an ATP binding site. The segment at Ser31 to Val61 is NMP. AMP-binding positions include Ser32, Arg37, Leu59 to Val61, Gly87 to Arg90, and Gln94. The tract at residues Leu124–Asp163 is LID. An ATP-binding site is contributed by Arg125. Zn(2+) contacts are provided by Cys128 and Cys131. ATP is bound at residue Ile134 to Tyr135. Residues Cys150 and Cys153 each coordinate Zn(2+). AMP is bound by residues Arg160 and Arg171. An ATP-binding site is contributed by Lys199.

The protein belongs to the adenylate kinase family. Monomer.

It is found in the cytoplasm. The catalysed reaction is AMP + ATP = 2 ADP. The protein operates within purine metabolism; AMP biosynthesis via salvage pathway; AMP from ADP: step 1/1. In terms of biological role, catalyzes the reversible transfer of the terminal phosphate group between ATP and AMP. Plays an important role in cellular energy homeostasis and in adenine nucleotide metabolism. The protein is Adenylate kinase of Mycoplasmoides gallisepticum (strain R(low / passage 15 / clone 2)) (Mycoplasma gallisepticum).